The sequence spans 446 residues: D(1A) dopamine receptor (446 aa).

The Extracellular portion of the chain corresponds to 1 to 22 (MPLNDTTMDRRGLVVERDFSFR). N-linked (GlcNAc...) asparagine glycosylation occurs at Asn-4. The chain crosses the membrane as a helical span at residues 23–48 (ILTACFLSLLILSTLLGNTLVCAAVI). Residues 49 to 59 (RFRHLRSKVTN) lie on the Cytoplasmic side of the membrane. Residues 60-86 (FFVISLAVSDLLVAVLVMPWKAVAEIA) traverse the membrane as a helical segment. Topologically, residues 87 to 95 (GFWPFGSFC) are extracellular. Cysteines 95 and 185 form a disulfide. A helical membrane pass occupies residues 96–118 (NIWVAFDIMCSTASILNLCVISV). Residues 119–137 (DRYWAISSPFRYERKMTPK) lie on the Cytoplasmic side of the membrane. Residues 138-162 (AAFILISVAWTLSVLISFIPVQLNW) traverse the membrane as a helical segment. Over 163–191 (HKARPLSSPDGNVSSQDETMDNCDSSLSR) the chain is Extracellular. The chain crosses the membrane as a helical span at residues 192–217 (TYAISSSLISFYIPVAIMIVTYTRIY). Topologically, residues 218-271 (RIAQKQIRRISALERAAVHAKNCQNTTGNGANVECSQPESSFKMSFKRETKVLK) are cytoplasmic. A helical transmembrane segment spans residues 272–298 (TLSVIMGVFVCCWLPFFILNCMVPFCE). Residues 299-315 (SDLPSGETKPFCIDSIT) lie on the Extracellular side of the membrane. The chain crosses the membrane as a helical span at residues 316–340 (FDVFVWFGWANSSLNPIIYAFNADF). Residues 341–446 (RKAFSTLLGC…PITQNGQHKT (106 aa)) are Cytoplasmic-facing. 2 S-palmitoyl cysteine lipidation sites follow: Cys-350 and Cys-354.

The protein belongs to the G-protein coupled receptor 1 family. In terms of assembly, interacts with DNAJC14 via its C-terminus.

The protein localises to the cell membrane. It is found in the endoplasmic reticulum membrane. Its subcellular location is the cell projection. The protein resides in the cilium membrane. It localises to the dendrite. The protein localises to the dendritic spine. Its function is as follows. This is one of the five types (D1 to D5) of receptors for dopamine. The activity of this receptor is mediated by G proteins which activate adenylyl cyclase. The polypeptide is D(1A) dopamine receptor (DRD1) (Didelphis virginiana (North American opossum)).